Here is a 474-residue protein sequence, read N- to C-terminus: E3 ubiquitin-protein ligase rnf168 (474 aa).

Residues 1–12 show a composition bias toward basic and acidic residues; sequence MPPVSEVDRGPV. Residues 1 to 20 form a disordered region; the sequence is MPPVSEVDRGPVEESSGGLK. Residues 26 to 65 form an RING-type zinc finger; that stretch reads CPVCLEIFLEPVTLPCMHTFCKPCFLETVDKSNMCCPLCR. The LR motif 1 signature appears at 119 to 137; that stretch reads VCQPGELRKEYEDQISKLV. The UMI motif motif lies at 152–160; it reads EEYIQRLLA. Residues 174-195 carry the MIU motif 1 motif; sequence EEQQLENDEKLARLLSLELNSG. A compositionally biased stretch (polar residues) spans 192 to 203; sequence LNSGPASESTCN. 2 disordered regions span residues 192 to 259 and 367 to 474; these read LNSG…KPLS and IQKE…NMGS. Residues 233–243 are compositionally biased toward low complexity; the sequence is PSSSDSSPDSS. Positions 353–376 match the MIU motif 2 motif; it reads RWQQEEEDRRLALRIQKELDRENS. Residues 367–383 are compositionally biased toward basic and acidic residues; the sequence is IQKELDRENSVDRRKGS. The LR motif 2 motif lies at 379–390; sequence RRKGSADSYQLR. 2 stretches are compositionally biased toward polar residues: residues 385–402 and 409–418; these read DSYQ…TTSP and KGSNTTTAKN. Residues 422-432 show a composition bias toward basic and acidic residues; the sequence is RRGEEKTEKRL. Positions 443 to 457 are enriched in low complexity; the sequence is VKTPVSSTAVSSTVK.

This sequence belongs to the RNF168 family. In terms of assembly, monomer.

It localises to the nucleus. It catalyses the reaction S-ubiquitinyl-[E2 ubiquitin-conjugating enzyme]-L-cysteine + [acceptor protein]-L-lysine = [E2 ubiquitin-conjugating enzyme]-L-cysteine + N(6)-ubiquitinyl-[acceptor protein]-L-lysine.. Its pathway is protein modification; protein ubiquitination. Functionally, E3 ubiquitin-protein ligase required for accumulation of repair proteins to sites of DNA damage. Acts with ube2n/ubc13 to amplify the rnf8-dependent histone ubiquitination. Recruited to sites of DNA damage at double-strand breaks (DSBs) by binding to ubiquitinated histone H2A and ubiquitinates histone H2A and H2AX, leading to amplify the rnf8-dependent H2A ubiquitination and promoting the formation of 'Lys-63'-linked ubiquitin conjugates. This leads to concentrate ubiquitinated histones H2A and H2AX at DNA lesions. Catalyzes monoubiquitination of 'Lys-13' and 'Lys-15' of nucleosomal histone H2A (H2AK13Ub and H2AK15Ub, respectively). This is E3 ubiquitin-protein ligase rnf168 from Danio rerio (Zebrafish).